The sequence spans 452 residues: Keratin, type II cytoskeletal 80 (452 aa).

The head stretch occupies residues 1–82; that stretch reads MAYRSCVVGF…DPAVQQQKNQ (82 aa). Residue serine 45 is modified to Phosphoserine. The interval 82–118 is coil 1A; the sequence is QEKEEMKALNDKFASLIGKVQALEQRNQLLETRWSFL. Residues 83–394 form the IF rod domain; sequence EKEEMKALND…KLMEGEESRM (312 aa). The interval 119–135 is linker 1; the sequence is QGQGSATFDLSHHYETF. Positions 136 to 227 are coil 1B; that stretch reads QGRLQEELRK…TVYEQELKDL (92 aa). The linker 12 stretch occupies residues 228 to 251; it reads TAQVKDVSVTVGLDSRCHIDLSGI. Residues 252-390 are coil 2; the sequence is VEEVKAQYDA…ATYHKLMEGE (139 aa). The tract at residues 391–452 is tail; the sequence is ESRMDLPSAT…YLSQESEASE (62 aa). The disordered stretch occupies residues 412 to 452; that stretch reads TASKSGLTKTSSRKKKNRRGPVIKITEMSEKYLSQESEASE. Residues 422 to 432 are compositionally biased toward basic residues; that stretch reads SSRKKKNRRGP. The span at 443–452 shows a compositional bias: polar residues; it reads YLSQESEASE.

The protein belongs to the intermediate filament family. Heterotetramer of two type I and two type II keratins.

This is Keratin, type II cytoskeletal 80 (Krt80) from Mus musculus (Mouse).